We begin with the raw amino-acid sequence, 715 residues long: ATP-dependent RecD2 DNA helicase (715 aa).

The tract at residues 1 to 150 (MSAALPAEPF…STLHKMVSSW (150 aa)) is not required for helicase activity. Residues Gln-343 and 363 to 367 (GTGKS) each bind ATP. 2 DNA-binding regions span residues Gly-391 and 407–414 (TVHRLLGY). Gln-466 is an ATP binding site. A DNA-binding region is located at residue Val-470. Residue Arg-493 coordinates ATP. 3 consecutive DNA-binding regions follow at residues 554–555 (RK), 596–604 (NDYNNEIFN), and 644–647 (TVHR). Arg-679 is a binding site for ATP.

Belongs to the RecD family. RecD2 subfamily. As to quaternary structure, monomer; homodimers seem to be inactive.

It catalyses the reaction Couples ATP hydrolysis with the unwinding of duplex DNA at the replication fork by translocating in the 5'-3' direction. This creates two antiparallel DNA single strands (ssDNA). The leading ssDNA polymer is the template for DNA polymerase III holoenzyme which synthesizes a continuous strand.. The catalysed reaction is ATP + H2O = ADP + phosphate + H(+). Functionally, DNA-dependent ATPase (ssDNA stimulates the ATPase better than dsDNA) and ATP-dependent 5'-3' DNA helicase. Plays a role in an antioxidant pathway. Involved in DNA damage repair and/or recombination. Appears to move along DNA in single base steps, powered by hydrolysis of 1 molecule of ATP. Has low processivity, unwinds about 15-20 base pairs/second. Short (20 bp) substrates with 5'-overhangs or forked ends are the best substrates, is much less efficient on 52 or 76 bp substrates with 5'-overhangs. The presence of single-stranded DNA-binding protein (SSB) increases unwinding 4-5 fold. Has no activity on blunt DNA or DNA with 3'-overhangs. Requires at least 10 bases of 5'-ssDNA for helicase activity. The polypeptide is ATP-dependent RecD2 DNA helicase (Deinococcus radiodurans (strain ATCC 13939 / DSM 20539 / JCM 16871 / CCUG 27074 / LMG 4051 / NBRC 15346 / NCIMB 9279 / VKM B-1422 / R1)).